Consider the following 858-residue polypeptide: Volume-regulated anion channel subunit LRRC8D (858 aa).

At 1 to 22 the chain is on the cytoplasmic side; it reads MFTLAEVASLNDIQPTYRILKP. Residues 23-48 traverse the membrane as a helical segment; that stretch reads WWDVFMDYLAVVMLMVAIFAGTMQLT. The Extracellular segment spans residues 49–163; that stretch reads KDQVVCLPVL…YHLALPWYSK (115 aa). Cysteine 54 and cysteine 354 are disulfide-bonded. Positions 118–137 are disordered; it reads AESTFPSQETKKEKRDPTGR. Over residues 126-137 the composition is skewed to basic and acidic residues; sequence ETKKEKRDPTGR. The helical transmembrane segment at 164–182 threads the bilayer; that stretch reads YFPYLALIHTIILMVSSNF. Residues 183–308 lie on the Cytoplasmic side of the membrane; that stretch reads WFKYPKTCSK…EDSDLIYKLY (126 aa). The interval 221 to 251 is disordered; the sequence is SEENKQRITGAQTLPKHVSTSSDEGSPSAST. The span at 227–251 shows a compositional bias: polar residues; that stretch reads RITGAQTLPKHVSTSSDEGSPSAST. Phosphoserine is present on residues serine 241, serine 242, and serine 246. The helical transmembrane segment at 309–330 threads the bilayer; sequence VVQTLIKTAKFIFILCYTANFV. The Extracellular segment spans residues 331–360; that stretch reads NAISFEHVCKPKVEHLTGYEVFECTHNMAY. A helical membrane pass occupies residues 361-386; it reads MLKKLLISYISIICVYGFICLYTLFW. Over 387–858 the chain is Cytoplasmic; that stretch reads LFRIPLKEYS…DVNVPFANGI (472 aa). 13 LRR repeats span residues 514–534, 538–559, 561–582, 589–609, 612–632, 636–657, 659–680, 684–705, 707–728, 730–751, 753–774, 776–797, and 799–820; these read NLQE…AFSF, HLRC…VYLL, NLRE…IGLE, HLKI…ITDV, HLTK…NSLK, NVAE…IFSL, NLQE…ISFQ, RLTC…ITHV, NLES…VFSL, KLRC…IGLL, NLQH…LFKC, KLRT…ISQL, and QLTQ…LGQC.

This sequence belongs to the LRRC8 family. As to quaternary structure, heterohexamer; oligomerizes with other LRRC8 proteins (LRRC8A, LRRC8B, LRRC8C and/or LRRC8E) to form a heterohexamer. In vivo, the subunit composition may depend primarily on expression levels, and heterooligomeric channels containing various proportions of the different LRRC8 proteins may coexist.

Its subcellular location is the cell membrane. The protein localises to the endoplasmic reticulum membrane. The catalysed reaction is chloride(in) = chloride(out). It catalyses the reaction iodide(out) = iodide(in). It carries out the reaction taurine(out) = taurine(in). Its function is as follows. Non-essential component of the volume-regulated anion channel (VRAC, also named VSOAC channel), an anion channel required to maintain a constant cell volume in response to extracellular or intracellular osmotic changes. The VRAC channel conducts iodide better than chloride and can also conduct organic osmolytes like taurine. Plays a redundant role in the efflux of amino acids, such as aspartate, in response to osmotic stress. Channel activity requires LRRC8A plus at least one other family member (LRRC8B, LRRC8C, LRRC8D or LRRC8E); channel characteristics depend on the precise subunit composition. Also acts as a regulator of glucose-sensing in pancreatic beta cells: VRAC currents, generated in response to hypotonicity- or glucose-induced beta cell swelling, depolarize cells, thereby causing electrical excitation, leading to increase glucose sensitivity and insulin secretion. VRAC channels containing LRRC8D inhibit transport of immunoreactive cyclic dinucleotide GMP-AMP (2'-3'-cGAMP), an immune messenger produced in response to DNA virus in the cytosol. This is Volume-regulated anion channel subunit LRRC8D from Rattus norvegicus (Rat).